Consider the following 225-residue polypeptide: Late gene expression regulator BDLF4 (225 aa).

Residues 1–20 (MSDQGRLSLPRGEGGTDEPN) are disordered.

Belongs to the herpesviridae UL92 family.

Part of the viral pre-initiation complex (vPIC) that is responsible for the expression of vPIC-dependent late genes. vPIC is composed of at least BcRF1 that binds the viral TATT box, BDLF3.5, BDLF4, BFRF2, BGLF3, BGLF4 and BVLF1. The polypeptide is Late gene expression regulator BDLF4 (Homo sapiens (Human)).